A 429-amino-acid polypeptide reads, in one-letter code: MGNSGDLEQALQDGNIFRQLNALIVAHLRHHNLSQVASAVASATMTPLNIEVPPNRLLELVAKGLAAENNGTLRGVSSSVLLPSSYGSITTPRTASIDFSVNHAKGSSKTIPKHESKTLSEHKSVVRCARFSPDGMFFATGGADTSIKLFEVPKVKQMISGDTQARPLIRTFYDHAEPINDLDFHPRSTILISSAKDNCIKFFDFSKTTAKRAFKVFQDTHNVRSISFHPSGEFLLAGTDHPIPHLYDVNTYQCFLPSNFPDSGVSGAINQVRYSSTGSIYITASKDGAIRLFDGVSAKCVRSIGNAHGKSEVTSAVFTKDQRFVLSSGKDSTVKLWEIGSGRMVKEYLGAKRVKLRSQAIFNDTEEFVISIDEASNEVVTWDARTADKVAKWPSNHNGAPRWIEHSPVESVFVTCGIDRSIRFWKESV.

A hydrophobic region spans residues Leu20–Ala41. WD repeat units follow at residues Glu121–Ser160, Asp174–Ala213, Gln218–Pro257, Gly264–Ser303, His308–Glu347, Ala351–Lys392, and Asn396–Val429.

As to quaternary structure, homodimer. Belongs to the CSTF complex. Forms a complex with cleavage and polyadenylation specificity factor (CPSF) subunits CSTF64, PABN3, CPSF30, FIPS5 and CPSF100.

It localises to the nucleus. One of the multiple factors required for polyadenylation and 3'-end cleavage of pre-mRNAs. May be responsible for the interaction of CSTF with other factors to form a stable complex on the pre-mRNA. The polypeptide is Cleavage stimulation factor subunit 50 (Arabidopsis thaliana (Mouse-ear cress)).